Consider the following 386-residue polypeptide: MIISAASDYRAAAEARLPPFLFHYMDGGAYAEHTLRRNVSDLADIALRQRVLRNMSDLSLSTELFGETLAMPVALAPVGLTGMYARRGEVQAARAAAARGIPFTLSTVSVCPIEEVAPAIDRPMWFQLYVLKDRGFMRNALERAKAAGVTTLVFTVDMPTPGARYRDAHSGMSGPNAPLRRMLQAMTHPRWAWDVGLLGKPHDLGNISTYRGSPTGLQDYIGWLAANFDPSISWKDLEWIREFWTGPMVIKGILDPEDARDAVRFGADGIVVSNHGGRQLDGVLSSARALPAIADAVKGELKILADSGIRSGLDVVRMLALGADAVLLGRAFVYALAAGGQAGVENLLTLIEREMRVAMILTGTHSVAEISGDALSRVTREAAVVP.

The FMN hydroxy acid dehydrogenase domain maps to 1–380 (MIISAASDYR…SGDALSRVTR (380 aa)). Tyr24 contributes to the substrate binding site. Ser106 and Gln127 together coordinate FMN. Residue Tyr129 coordinates substrate. FMN is bound at residue Thr155. Residue Arg164 participates in substrate binding. FMN is bound at residue Lys251. Catalysis depends on His275, which acts as the Proton acceptor. Arg278 provides a ligand contact to substrate. FMN is bound at residue 306–330 (DSGIRSGLDVVRMLALGADAVLLGR).

This sequence belongs to the FMN-dependent alpha-hydroxy acid dehydrogenase family. Requires FMN as cofactor.

It localises to the cell inner membrane. It catalyses the reaction (S)-lactate + A = pyruvate + AH2. Catalyzes the conversion of L-lactate to pyruvate. Is coupled to the respiratory chain. This is L-lactate dehydrogenase from Xanthomonas campestris pv. campestris (strain B100).